The following is a 314-amino-acid chain: R2-like ligand binding oxidase (314 aa).

3 residues coordinate Mn(2+): glutamate 68, glutamate 101, and histidine 104. Positions 71–162 (VTEDIQPFMS…AAQVRASVTY (92 aa)) form a cross-link, 3-(O4'-tyrosyl)-valine (Val-Tyr). Glutamate 101 contributes to the Fe cation binding site. The Fe cation site is built by glutamate 167, glutamate 202, and histidine 205.

The protein belongs to the ribonucleoside diphosphate reductase small chain family. R2-like ligand binding oxidase subfamily. In terms of assembly, homodimer. It depends on Fe cation as a cofactor. Mn(2+) is required as a cofactor.

In terms of biological role, probable oxidase that might be involved in lipid metabolism. This chain is R2-like ligand binding oxidase, found in Mycobacterium tuberculosis (strain ATCC 25177 / H37Ra).